We begin with the raw amino-acid sequence, 214 residues long: GTP-binding nuclear protein Ran (214 aa).

Residues 6 to 170 enclose the Small GTPase Ran-type domain; it reads YIPQYKLILV…LWLARRLSNQ (165 aa). 17–24 contacts GTP; sequence DGGVGKTT. The tract at residues 36–44 is switch-I; sequence KKYIPTLGV. Residues Gly67, 121–124, and 149–151 each bind GTP; these read NKVD and SAR. Positions 67 to 83 are switch-II; it reads GQEKFGGLRDGYYIKSD.

Belongs to the small GTPase superfamily. Ran family. As to quaternary structure, found in a nuclear export complex with RanGTP, exportin and pre-miRNA.

Its subcellular location is the nucleus. GTP-binding protein involved in nucleocytoplasmic transport. Required for the import of protein into the nucleus and also for RNA export. Involved in chromatin condensation and control of cell cycle. The protein is GTP-binding nuclear protein Ran of Plasmodium falciparum.